The chain runs to 155 residues: Large ribosomal subunit protein uL22c (155 aa).

It belongs to the universal ribosomal protein uL22 family. Part of the 50S ribosomal subunit.

The protein resides in the plastid. The protein localises to the chloroplast. This protein binds specifically to 23S rRNA. In terms of biological role, the globular domain of the protein is located near the polypeptide exit tunnel on the outside of the subunit, while an extended beta-hairpin is found that lines the wall of the exit tunnel in the center of the 70S ribosome. In Solanum tuberosum (Potato), this protein is Large ribosomal subunit protein uL22c (rpl22).